A 183-amino-acid chain; its full sequence is GMP synthase [glutamine-hydrolyzing] subunit A (183 aa).

A Glutamine amidotransferase type-1 domain is found at 2–183 (KIYVIYNYGQ…YRNFIEICKK (182 aa)). The active-site Nucleophile is C74. Residues H161 and E163 contribute to the active site.

Heterodimer composed of a glutamine amidotransferase subunit (A) and a GMP-binding subunit (B).

The enzyme catalyses XMP + L-glutamine + ATP + H2O = GMP + L-glutamate + AMP + diphosphate + 2 H(+). It participates in purine metabolism; GMP biosynthesis; GMP from XMP (L-Gln route): step 1/1. Its function is as follows. Catalyzes the synthesis of GMP from XMP. In Archaeoglobus fulgidus (strain ATCC 49558 / DSM 4304 / JCM 9628 / NBRC 100126 / VC-16), this protein is GMP synthase [glutamine-hydrolyzing] subunit A.